The primary structure comprises 407 residues: Phosphopentomutase (407 aa).

6 residues coordinate Mn(2+): aspartate 10, aspartate 306, histidine 311, aspartate 347, histidine 348, and histidine 359.

Belongs to the phosphopentomutase family. Mn(2+) is required as a cofactor.

The protein localises to the cytoplasm. The enzyme catalyses 2-deoxy-alpha-D-ribose 1-phosphate = 2-deoxy-D-ribose 5-phosphate. It catalyses the reaction alpha-D-ribose 1-phosphate = D-ribose 5-phosphate. It functions in the pathway carbohydrate degradation; 2-deoxy-D-ribose 1-phosphate degradation; D-glyceraldehyde 3-phosphate and acetaldehyde from 2-deoxy-alpha-D-ribose 1-phosphate: step 1/2. In terms of biological role, isomerase that catalyzes the conversion of deoxy-ribose 1-phosphate (dRib-1-P) and ribose 1-phosphate (Rib-1-P) to deoxy-ribose 5-phosphate (dRib-5-P) and ribose 5-phosphate (Rib-5-P), respectively. This chain is Phosphopentomutase, found in Buchnera aphidicola subsp. Acyrthosiphon pisum (strain 5A).